Reading from the N-terminus, the 274-residue chain is Serine/threonine-protein kinase 1 (274 aa).

Residues 16–273 (AVLAPKVVNG…HSFLASRHDY (258 aa)) enclose the Protein kinase domain. Residues 22–30 (VVNGRFGKM) and Lys-46 each bind ATP. Asp-134 acts as the Proton acceptor in catalysis.

This sequence belongs to the protein kinase superfamily. Ser/Thr protein kinase family.

The enzyme catalyses L-seryl-[protein] + ATP = O-phospho-L-seryl-[protein] + ADP + H(+). The catalysed reaction is L-threonyl-[protein] + ATP = O-phospho-L-threonyl-[protein] + ADP + H(+). This is Serine/threonine-protein kinase 1 (PK1) from Orgyia pseudotsugata multicapsid polyhedrosis virus (OpMNPV).